The following is a 239-amino-acid chain: Ribose-5-phosphate isomerase A (239 aa).

Residues 34–37 (TGST), 94–97 (DGAD), and 107–110 (KGGG) each bind substrate. Residue E116 is the Proton acceptor of the active site. Position 134 (K134) interacts with substrate.

This sequence belongs to the ribose 5-phosphate isomerase family. Homodimer.

The catalysed reaction is aldehydo-D-ribose 5-phosphate = D-ribulose 5-phosphate. The protein operates within carbohydrate degradation; pentose phosphate pathway; D-ribose 5-phosphate from D-ribulose 5-phosphate (non-oxidative stage): step 1/1. Its function is as follows. Catalyzes the reversible conversion of ribose-5-phosphate to ribulose 5-phosphate. The chain is Ribose-5-phosphate isomerase A from Treponema denticola (strain ATCC 35405 / DSM 14222 / CIP 103919 / JCM 8153 / KCTC 15104).